Reading from the N-terminus, the 547-residue chain is Chaperonin GroEL 1 (547 aa).

ATP-binding positions include 30-33 (TLGP), Lys-51, 87-91 (DGTTT), Gly-415, and Asp-496.

Belongs to the chaperonin (HSP60) family. In terms of assembly, forms a cylinder of 14 subunits composed of two heptameric rings stacked back-to-back. Interacts with the co-chaperonin GroES.

It localises to the cytoplasm. The enzyme catalyses ATP + H2O + a folded polypeptide = ADP + phosphate + an unfolded polypeptide.. In terms of biological role, together with its co-chaperonin GroES, plays an essential role in assisting protein folding. The GroEL-GroES system forms a nano-cage that allows encapsulation of the non-native substrate proteins and provides a physical environment optimized to promote and accelerate protein folding. This Rhodopseudomonas palustris (strain ATCC BAA-98 / CGA009) protein is Chaperonin GroEL 1.